Reading from the N-terminus, the 556-residue chain is 2-succinyl-5-enolpyruvyl-6-hydroxy-3-cyclohexene-1-carboxylate synthase (556 aa).

The protein belongs to the TPP enzyme family. MenD subfamily. Homodimer. The cofactor is Mg(2+). Mn(2+) serves as cofactor. It depends on thiamine diphosphate as a cofactor.

It catalyses the reaction isochorismate + 2-oxoglutarate + H(+) = 5-enolpyruvoyl-6-hydroxy-2-succinyl-cyclohex-3-ene-1-carboxylate + CO2. It participates in quinol/quinone metabolism; 1,4-dihydroxy-2-naphthoate biosynthesis; 1,4-dihydroxy-2-naphthoate from chorismate: step 2/7. The protein operates within quinol/quinone metabolism; menaquinone biosynthesis. Its function is as follows. Catalyzes the thiamine diphosphate-dependent decarboxylation of 2-oxoglutarate and the subsequent addition of the resulting succinic semialdehyde-thiamine pyrophosphate anion to isochorismate to yield 2-succinyl-5-enolpyruvyl-6-hydroxy-3-cyclohexene-1-carboxylate (SEPHCHC). This chain is 2-succinyl-5-enolpyruvyl-6-hydroxy-3-cyclohexene-1-carboxylate synthase, found in Shigella flexneri serotype 5b (strain 8401).